The following is a 252-amino-acid chain: 4-hydroxy-tetrahydrodipicolinate reductase (252 aa).

Residues 8–13, 84–86, and 108–111 each bind NAD(+); these read GCCGKM, CST, and SANM. The active-site Proton donor/acceptor is His-141. His-142 serves as a coordination point for (S)-2,3,4,5-tetrahydrodipicolinate. The active-site Proton donor is the Lys-145. Residue 151–152 coordinates (S)-2,3,4,5-tetrahydrodipicolinate; it reads GT.

Belongs to the DapB family.

The protein resides in the cytoplasm. The catalysed reaction is (S)-2,3,4,5-tetrahydrodipicolinate + NAD(+) + H2O = (2S,4S)-4-hydroxy-2,3,4,5-tetrahydrodipicolinate + NADH + H(+). It catalyses the reaction (S)-2,3,4,5-tetrahydrodipicolinate + NADP(+) + H2O = (2S,4S)-4-hydroxy-2,3,4,5-tetrahydrodipicolinate + NADPH + H(+). The protein operates within amino-acid biosynthesis; L-lysine biosynthesis via DAP pathway; (S)-tetrahydrodipicolinate from L-aspartate: step 4/4. In terms of biological role, catalyzes the conversion of 4-hydroxy-tetrahydrodipicolinate (HTPA) to tetrahydrodipicolinate. The protein is 4-hydroxy-tetrahydrodipicolinate reductase of Clostridium botulinum (strain Eklund 17B / Type B).